The following is a 383-amino-acid chain: Succinyl-diaminopimelate desuccinylase (383 aa).

Residue His73 participates in Zn(2+) binding. Residue Asp75 is part of the active site. A Zn(2+)-binding site is contributed by Asp107. The Proton acceptor role is filled by Glu141. Zn(2+)-binding residues include Glu142, Glu170, and His356.

It belongs to the peptidase M20A family. DapE subfamily. In terms of assembly, homodimer. The cofactor is Zn(2+). Co(2+) serves as cofactor.

It carries out the reaction N-succinyl-(2S,6S)-2,6-diaminopimelate + H2O = (2S,6S)-2,6-diaminopimelate + succinate. The protein operates within amino-acid biosynthesis; L-lysine biosynthesis via DAP pathway; LL-2,6-diaminopimelate from (S)-tetrahydrodipicolinate (succinylase route): step 3/3. In terms of biological role, catalyzes the hydrolysis of N-succinyl-L,L-diaminopimelic acid (SDAP), forming succinate and LL-2,6-diaminopimelate (DAP), an intermediate involved in the bacterial biosynthesis of lysine and meso-diaminopimelic acid, an essential component of bacterial cell walls. The chain is Succinyl-diaminopimelate desuccinylase from Pseudomonas putida (strain GB-1).